The chain runs to 638 residues: Epithelial sodium channel subunit beta (638 aa).

Residues 1–50 (MPVKKYLLKCLHRLQKGPGYTYKELLVWYCNNTNTHGPKRIICEGPKKKA) lie on the Cytoplasmic side of the membrane. A helical membrane pass occupies residues 51–71 (MWFLLTLLFACLVCWQWGVFI). Residues 72-530 (QTYLSWEVSV…GGQFGFWMGG (459 aa)) are Extracellular-facing. 9 cysteine pairs are disulfide-bonded: Cys98–Cys270, Cys182–Cys187, Cys194–Cys201, Cys247–Cys254, Cys359–Cys446, Cys384–Cys442, Cys388–Cys438, Cys397–Cys424, and Cys399–Cys413. Asn135 and Asn141 each carry an N-linked (GlcNAc...) asparagine glycan. A helical membrane pass occupies residues 531-551 (SVLCLIEFGEIIIDFIWITVI). Residues 552–638 (KLVASCKGLR…MESDSEVEAI (87 aa)) lie on the Cytoplasmic side of the membrane. A disordered region spans residues 598 to 620 (NAEVYPDQQTLPIPGTPPPNYDS). Positions 614–618 (PPPNY) match the PY motif; recruits WW domain-containing proteins and is thereby required for ubiquitination and inhibition of the channel by NEDD4 and NEDD4L motif. Phosphoserine is present on residues Ser631 and Ser633.

The protein belongs to the amiloride-sensitive sodium channel (TC 1.A.6) family. SCNN1B subfamily. Component of the heterotrimeric epithelial sodium channel (ENaC) composed of an alpha/SCNN1A, a beta/SCNN1B and a gamma/SCNN1G subunit. Interacts with WWP1 (via WW domains). Interacts with WWP2 (via WW domains). Interacts with the full-length immature form of PCSK9 (pro-PCSK9). Interacts (N-glycosylated) with BPIFA1; the interaction is direct and inhibits the proteolytic processing of SCNN1A and SCNN1G and the activation of ENaC. Post-translationally, ubiquitinated. Can be ubiquitinated at multiple sites and undergo monoubiquitination and polyubiquitination. Ubiquitination by NEDD4 or NEDD4L inhibits the ENaC channel through endocytosis, intracellular retention and degradation of its individual subunits. However, some studies could not confirm the ubiquitination of this subunit of the ENaC. N-glycosylated. N-glycosylation is required for interaction with BPIFA1. In terms of processing, phosphorylated on serine and threonine residues. Aldosterone and insulin increase the basal level of phosphorylation. Expressed in lung and epididymis. In the caput region of the epididymis, expressed at the luminal and basolateral surfaces of the ducts and in the smooth muscle coat. In the caudal region of the epididymis, expressed along the luminal border but not continuously, in the smooth muscle coat, in the interstitial muscle tissue and in sperm in the caudal lumen.

The protein resides in the apical cell membrane. The protein localises to the cytoplasmic vesicle membrane. It carries out the reaction Na(+)(in) = Na(+)(out). Its activity is regulated as follows. Originally identified and characterized by its inhibition by the diuretic drug amiloride. Functionally, this is one of the three pore-forming subunits of the heterotrimeric epithelial sodium channel (ENaC), a critical regulator of sodium balance and fluid homeostasis. ENaC operates in epithelial tissues, where it mediates the electrodiffusion of sodium ions from extracellular fluid through the apical membrane of cells, with water following osmotically. It plays a key role in maintaining sodium homeostasis through electrogenic sodium reabsorption in the kidneys. This subunit is not essential for ENaC function in airway surface liquid homeostasis and proper mucus clearance. This Rattus norvegicus (Rat) protein is Epithelial sodium channel subunit beta.